Here is a 233-residue protein sequence, read N- to C-terminus: uncharacterized protein (233 aa).

Residues 190 to 233 are disordered; sequence LNTSLSEDDTESIVETDYSEEEKESISETESSSDDESYSLYDSF. A compositionally biased stretch (acidic residues) spans 195-212; it reads SEDDTESIVETDYSEEEK.

This sequence belongs to the asfivirus DP238L family.

This is an uncharacterized protein from Ornithodoros (relapsing fever ticks).